We begin with the raw amino-acid sequence, 538 residues long: Hydroxylamine reductase (538 aa).

[4Fe-4S] cluster is bound by residues Cys-3, Cys-6, Cys-15, and Cys-21. 8 residues coordinate hybrid [4Fe-2O-2S] cluster: His-239, Glu-263, Cys-307, Cys-394, Cys-422, Cys-447, Glu-481, and Lys-483. Cys-394 carries the cysteine persulfide modification.

The protein belongs to the HCP family. [4Fe-4S] cluster serves as cofactor. Hybrid [4Fe-2O-2S] cluster is required as a cofactor.

Its subcellular location is the cytoplasm. The catalysed reaction is A + NH4(+) + H2O = hydroxylamine + AH2 + H(+). Catalyzes the reduction of hydroxylamine to form NH(3) and H(2)O. In Solidesulfovibrio magneticus (strain ATCC 700980 / DSM 13731 / RS-1) (Desulfovibrio magneticus), this protein is Hydroxylamine reductase.